The following is a 262-amino-acid chain: Acyl-[acyl-carrier-protein]--UDP-N-acetylglucosamine O-acyltransferase (262 aa).

It belongs to the transferase hexapeptide repeat family. LpxA subfamily. As to quaternary structure, homotrimer.

It localises to the cytoplasm. It catalyses the reaction a (3R)-hydroxyacyl-[ACP] + UDP-N-acetyl-alpha-D-glucosamine = a UDP-3-O-[(3R)-3-hydroxyacyl]-N-acetyl-alpha-D-glucosamine + holo-[ACP]. It functions in the pathway glycolipid biosynthesis; lipid IV(A) biosynthesis; lipid IV(A) from (3R)-3-hydroxytetradecanoyl-[acyl-carrier-protein] and UDP-N-acetyl-alpha-D-glucosamine: step 1/6. In terms of biological role, involved in the biosynthesis of lipid A, a phosphorylated glycolipid that anchors the lipopolysaccharide to the outer membrane of the cell. The sequence is that of Acyl-[acyl-carrier-protein]--UDP-N-acetylglucosamine O-acyltransferase from Paraburkholderia phymatum (strain DSM 17167 / CIP 108236 / LMG 21445 / STM815) (Burkholderia phymatum).